Here is a 452-residue protein sequence, read N- to C-terminus: Probable mannose-6-phosphate isomerase (452 aa).

Zn(2+) contacts are provided by Gln141, His143, Glu168, and His295. Residue Arg314 is part of the active site.

Belongs to the mannose-6-phosphate isomerase type 1 family. Zn(2+) serves as cofactor.

It localises to the cytoplasm. The catalysed reaction is D-mannose 6-phosphate = D-fructose 6-phosphate. The protein operates within nucleotide-sugar biosynthesis; GDP-alpha-D-mannose biosynthesis; alpha-D-mannose 1-phosphate from D-fructose 6-phosphate: step 1/2. Involved in the synthesis of the GDP-mannose and dolichol-phosphate-mannose required for a number of critical mannosyl transfer reactions. This chain is Probable mannose-6-phosphate isomerase (mpi), found in Dictyostelium discoideum (Social amoeba).